Reading from the N-terminus, the 130-residue chain is Small ribosomal subunit protein uS8 (130 aa).

The protein belongs to the universal ribosomal protein uS8 family. Part of the 30S ribosomal subunit. Contacts proteins S5 and S12.

Its function is as follows. One of the primary rRNA binding proteins, it binds directly to 16S rRNA central domain where it helps coordinate assembly of the platform of the 30S subunit. The chain is Small ribosomal subunit protein uS8 from Shewanella denitrificans (strain OS217 / ATCC BAA-1090 / DSM 15013).